A 101-amino-acid polypeptide reads, in one-letter code: MIPGELLIDDGEHELNAGRATVTVVVSNTGDRPVQIGSHYHFYEVNEALAFDREAARGFRLNIAAGTAVRFEPGQERTVELVELAGERIVYGFNGKVMGKL.

This sequence belongs to the urease beta subunit family. In terms of assembly, heterotrimer of UreA (gamma), UreB (beta) and UreC (alpha) subunits. Three heterotrimers associate to form the active enzyme.

The protein resides in the cytoplasm. The catalysed reaction is urea + 2 H2O + H(+) = hydrogencarbonate + 2 NH4(+). Its pathway is nitrogen metabolism; urea degradation; CO(2) and NH(3) from urea (urease route): step 1/1. This chain is Urease subunit beta, found in Paraburkholderia phytofirmans (strain DSM 17436 / LMG 22146 / PsJN) (Burkholderia phytofirmans).